Here is a 207-residue protein sequence, read N- to C-terminus: Guanylate kinase (207 aa).

In terms of domain architecture, Guanylate kinase-like spans 7–185 (GIVLVLCAPS…AYDELRAAYI (179 aa)). 14–21 (APSGTGKT) provides a ligand contact to ATP.

The protein belongs to the guanylate kinase family.

It is found in the cytoplasm. It carries out the reaction GMP + ATP = GDP + ADP. Its function is as follows. Essential for recycling GMP and indirectly, cGMP. The polypeptide is Guanylate kinase (Nitratidesulfovibrio vulgaris (strain ATCC 29579 / DSM 644 / CCUG 34227 / NCIMB 8303 / VKM B-1760 / Hildenborough) (Desulfovibrio vulgaris)).